A 116-amino-acid chain; its full sequence is Large ribosomal subunit protein bL19 (116 aa).

Belongs to the bacterial ribosomal protein bL19 family.

This protein is located at the 30S-50S ribosomal subunit interface and may play a role in the structure and function of the aminoacyl-tRNA binding site. This is Large ribosomal subunit protein bL19 from Mycoplasmopsis agalactiae (strain NCTC 10123 / CIP 59.7 / PG2) (Mycoplasma agalactiae).